Reading from the N-terminus, the 727-residue chain is 1,4-alpha-glucan branching enzyme GlgB (727 aa).

Aspartate 411 (nucleophile) is an active-site residue. The active-site Proton donor is glutamate 464.

This sequence belongs to the glycosyl hydrolase 13 family. GlgB subfamily. As to quaternary structure, monomer.

The enzyme catalyses Transfers a segment of a (1-&gt;4)-alpha-D-glucan chain to a primary hydroxy group in a similar glucan chain.. It participates in glycan biosynthesis; glycogen biosynthesis. Catalyzes the formation of the alpha-1,6-glucosidic linkages in glycogen by scission of a 1,4-alpha-linked oligosaccharide from growing alpha-1,4-glucan chains and the subsequent attachment of the oligosaccharide to the alpha-1,6 position. The protein is 1,4-alpha-glucan branching enzyme GlgB of Protochlamydia amoebophila (strain UWE25).